Reading from the N-terminus, the 734-residue chain is Myb-like protein J (734 aa).

Disordered stretches follow at residues 1-35, 128-196, and 221-378; these read MPNN…FKSN, QKDQ…PTMM, and SPIS…LKQG. A compositionally biased stretch (basic and acidic residues) spans 131–142; the sequence is QQQKEQQKEQQK. Over residues 164-173 the composition is skewed to low complexity; sequence TTTTTTTTTT. The span at 174–196 shows a compositional bias: polar residues; the sequence is AVEQQGAEQQDTNLNSTSSPTMM. Low complexity predominate over residues 221-230; sequence SPISSSLNNS. Residues 231 to 257 show a composition bias toward polar residues; the sequence is QDNTKPVSPDNIENTSNPMDTSSSNGK. A compositionally biased stretch (low complexity) spans 258–372; the sequence is TPTITPIVTP…GGKTNPTGKK (115 aa). Residues 371 to 426 form the HTH myb-type domain; it reads KKTSLKQGWTKEEHIRFLNGIQIHGKGAWKEIAQFVGTRTPTQIQSHAQKYYLRQK. Positions 399–422 form a DNA-binding region, H-T-H motif; the sequence is WKEIAQFVGTRTPTQIQSHAQKYY. A compositionally biased stretch (low complexity) spans 445 to 454; it reads DDNLNNSNKN. A disordered region spans residues 445 to 623; it reads DDNLNNSNKN…GNILRHQNSH (179 aa). Basic and acidic residues predominate over residues 455 to 468; sequence NVDKNKQDDKEKKT. Residues 469-478 show a composition bias toward basic residues; sequence QKTKKTKSKS. Composition is skewed to low complexity over residues 489-543 and 574-615; these read QQQQ…SSQT and NNNN…NEGN.

The protein localises to the nucleus. The protein is Myb-like protein J (mybJ) of Dictyostelium discoideum (Social amoeba).